A 689-amino-acid chain; its full sequence is Methionine--tRNA ligase (689 aa).

The short motif at 13 to 23 (PYANGNFHIGH) is the 'HIGH' region element. Residues Cys-144, Cys-147, Cys-157, and Cys-160 each coordinate Zn(2+). Residues 341-345 (KMSKS) carry the 'KMSKS' region motif. Lys-344 contributes to the ATP binding site. Residues 583–689 (DFAKVDLRIA…PGASPGLRVR (107 aa)) enclose the tRNA-binding domain.

The protein belongs to the class-I aminoacyl-tRNA synthetase family. MetG type 1 subfamily. As to quaternary structure, homodimer. Zn(2+) serves as cofactor.

The protein localises to the cytoplasm. It catalyses the reaction tRNA(Met) + L-methionine + ATP = L-methionyl-tRNA(Met) + AMP + diphosphate. Functionally, is required not only for elongation of protein synthesis but also for the initiation of all mRNA translation through initiator tRNA(fMet) aminoacylation. This chain is Methionine--tRNA ligase, found in Polaromonas sp. (strain JS666 / ATCC BAA-500).